The primary structure comprises 156 residues: Endoribonuclease YbeY (156 aa).

The Zn(2+) site is built by His122, His126, and His132.

Belongs to the endoribonuclease YbeY family. Zn(2+) serves as cofactor.

The protein localises to the cytoplasm. Single strand-specific metallo-endoribonuclease involved in late-stage 70S ribosome quality control and in maturation of the 3' terminus of the 16S rRNA. This chain is Endoribonuclease YbeY, found in Bacillus mycoides (strain KBAB4) (Bacillus weihenstephanensis).